Consider the following 150-residue polypeptide: Large ribosomal subunit protein bL9 (150 aa).

Belongs to the bacterial ribosomal protein bL9 family.

Binds to the 23S rRNA. This Wigglesworthia glossinidia brevipalpis protein is Large ribosomal subunit protein bL9.